We begin with the raw amino-acid sequence, 1367 residues long: DNA polymerase III PolC-type (1367 aa).

An Exonuclease domain is found at 358 to 513 (FVVLDFETTG…DDARVTAQVF (156 aa)).

This sequence belongs to the DNA polymerase type-C family. PolC subfamily.

It localises to the cytoplasm. The catalysed reaction is DNA(n) + a 2'-deoxyribonucleoside 5'-triphosphate = DNA(n+1) + diphosphate. Functionally, required for replicative DNA synthesis. This DNA polymerase also exhibits 3' to 5' exonuclease activity. The protein is DNA polymerase III PolC-type of Thermotoga petrophila (strain ATCC BAA-488 / DSM 13995 / JCM 10881 / RKU-1).